A 346-amino-acid polypeptide reads, in one-letter code: Holliday junction branch migration complex subunit RuvB (346 aa).

The tract at residues 4 to 185 (SDRIITASPF…FGIVSRLEFY (182 aa)) is large ATPase domain (RuvB-L). ATP-binding positions include leucine 24, arginine 25, glycine 66, lysine 69, threonine 70, threonine 71, 132 to 134 (EDY), arginine 175, tyrosine 185, and arginine 222. Residue threonine 70 participates in Mg(2+) binding. The small ATPAse domain (RuvB-S) stretch occupies residues 186 to 256 (TADELGKIVT…VADAALQMLD (71 aa)). Positions 259–346 (ATGLDVLDRK…TTVPSLFDPD (88 aa)) are head domain (RuvB-H). Positions 295, 314, and 319 each coordinate DNA.

The protein belongs to the RuvB family. In terms of assembly, homohexamer. Forms an RuvA(8)-RuvB(12)-Holliday junction (HJ) complex. HJ DNA is sandwiched between 2 RuvA tetramers; dsDNA enters through RuvA and exits via RuvB. An RuvB hexamer assembles on each DNA strand where it exits the tetramer. Each RuvB hexamer is contacted by two RuvA subunits (via domain III) on 2 adjacent RuvB subunits; this complex drives branch migration. In the full resolvosome a probable DNA-RuvA(4)-RuvB(12)-RuvC(2) complex forms which resolves the HJ.

It localises to the cytoplasm. The enzyme catalyses ATP + H2O = ADP + phosphate + H(+). Functionally, the RuvA-RuvB-RuvC complex processes Holliday junction (HJ) DNA during genetic recombination and DNA repair, while the RuvA-RuvB complex plays an important role in the rescue of blocked DNA replication forks via replication fork reversal (RFR). RuvA specifically binds to HJ cruciform DNA, conferring on it an open structure. The RuvB hexamer acts as an ATP-dependent pump, pulling dsDNA into and through the RuvAB complex. RuvB forms 2 homohexamers on either side of HJ DNA bound by 1 or 2 RuvA tetramers; 4 subunits per hexamer contact DNA at a time. Coordinated motions by a converter formed by DNA-disengaged RuvB subunits stimulates ATP hydrolysis and nucleotide exchange. Immobilization of the converter enables RuvB to convert the ATP-contained energy into a lever motion, pulling 2 nucleotides of DNA out of the RuvA tetramer per ATP hydrolyzed, thus driving DNA branch migration. The RuvB motors rotate together with the DNA substrate, which together with the progressing nucleotide cycle form the mechanistic basis for DNA recombination by continuous HJ branch migration. Branch migration allows RuvC to scan DNA until it finds its consensus sequence, where it cleaves and resolves cruciform DNA. This is Holliday junction branch migration complex subunit RuvB from Nitrosomonas europaea (strain ATCC 19718 / CIP 103999 / KCTC 2705 / NBRC 14298).